Consider the following 428-residue polypeptide: MNAHAQACAVTSAASPDGVLRERGQREVFCGLTGIVWLHRKIQDAFFLVVGSRTCAHLIQSAAGVMIFAEPRFATAIMEERDLAGLVDANDELDRIVTQLLARRPEIKLLFLVGSCPSEVIKLDLSRAALRLSQRFSPGVRVLNYSGSGIETTFTQGEDACLASLVPVLPAADRSARPSLLVVGALADVVEDQFKRTFAALGIDQVAFLPPRRSSELPAIGPETRVLLAQPFLGDTARALEERGCRRIAAPFPLGGEGTALWLAAAADAFGVSHAHVERTIAPLKARAERALARYRAQLAGKRVFLFPDSQIEIPLARFLSREIGMELVEVGTPYLHRDHLASELALLPGGTQLSEGQDVERQLDRCRDARPDLVVCGLGLANPLEAEGLTTKWSIELIFTPIQGFEQAGDLAELFARPLLRQTRLAV.

Residues Cys-30, Cys-55, and Cys-116 each coordinate [4Fe-4S] cluster.

This sequence belongs to the BchN/ChlN family. As to quaternary structure, protochlorophyllide reductase is composed of three subunits; BchL, BchN and BchB. Forms a heterotetramer of two BchB and two BchN subunits. The cofactor is [4Fe-4S] cluster.

The catalysed reaction is chlorophyllide a + oxidized 2[4Fe-4S]-[ferredoxin] + 2 ADP + 2 phosphate = protochlorophyllide a + reduced 2[4Fe-4S]-[ferredoxin] + 2 ATP + 2 H2O. It participates in porphyrin-containing compound metabolism; bacteriochlorophyll biosynthesis (light-independent). In terms of biological role, component of the dark-operative protochlorophyllide reductase (DPOR) that uses Mg-ATP and reduced ferredoxin to reduce ring D of protochlorophyllide (Pchlide) to form chlorophyllide a (Chlide). This reaction is light-independent. The NB-protein (BchN-BchB) is the catalytic component of the complex. The protein is Light-independent protochlorophyllide reductase subunit N of Bradyrhizobium sp. (strain BTAi1 / ATCC BAA-1182).